The primary structure comprises 604 residues: Beta-(1--&gt;2)glucan export ATP-binding/permease protein NdvA (604 aa).

Residues 21 to 311 (GWILAFANLL…VVSFINSVFM (291 aa)) form the ABC transmembrane type-1 domain. Helical transmembrane passes span 22-42 (WILA…PVLF), 68-88 (LLGA…AVAL), 146-166 (EHFA…YINW), 168-188 (LAIL…LVVH), 238-258 (LLAL…ITRA), and 285-305 (IVMF…VVSF). In terms of domain architecture, ABC transporter spans 345–579 (VEFKDVSFSY…QGHFAALARA (235 aa)). An ATP-binding site is contributed by 378–385 (GATGAGKS).

Belongs to the ABC transporter superfamily. Beta-(1--&gt;2)glucan exporter (TC 3.A.1.108.1) family. As to quaternary structure, homodimer.

The protein resides in the cell inner membrane. It carries out the reaction [(1-&gt;2)-beta-D-glucosyl](n)(in) + ATP + H2O = [(1-&gt;2)-beta-D-glucosyl](n)(out) + ADP + phosphate + H(+). In terms of biological role, involved in beta-(1--&gt;2)glucan export. Transmembrane domains (TMD) form a pore in the inner membrane and the ATP-binding domain (NBD) is responsible for energy generation. The protein is Beta-(1--&gt;2)glucan export ATP-binding/permease protein NdvA of Rhodopseudomonas palustris (strain BisB18).